The sequence spans 187 residues: Photosystem I assembly protein Ycf4 (187 aa).

A run of 2 helical transmembrane segments spans residues isoleucine 23–isoleucine 43 and phenylalanine 70–valine 90.

This sequence belongs to the Ycf4 family.

It localises to the plastid. Its subcellular location is the chloroplast thylakoid membrane. In terms of biological role, seems to be required for the assembly of the photosystem I complex. In Chara vulgaris (Common stonewort), this protein is Photosystem I assembly protein Ycf4.